The sequence spans 467 residues: 3-isopropylmalate dehydratase large subunit (467 aa).

Residues C347, C407, and C410 each coordinate [4Fe-4S] cluster.

This sequence belongs to the aconitase/IPM isomerase family. LeuC type 1 subfamily. As to quaternary structure, heterodimer of LeuC and LeuD. [4Fe-4S] cluster is required as a cofactor.

The enzyme catalyses (2R,3S)-3-isopropylmalate = (2S)-2-isopropylmalate. Its pathway is amino-acid biosynthesis; L-leucine biosynthesis; L-leucine from 3-methyl-2-oxobutanoate: step 2/4. Functionally, catalyzes the isomerization between 2-isopropylmalate and 3-isopropylmalate, via the formation of 2-isopropylmaleate. The polypeptide is 3-isopropylmalate dehydratase large subunit (Trichormus variabilis (strain ATCC 29413 / PCC 7937) (Anabaena variabilis)).